The following is a 616-amino-acid chain: DNA mismatch repair protein MutL (616 aa).

The protein belongs to the DNA mismatch repair MutL/HexB family.

Functionally, this protein is involved in the repair of mismatches in DNA. It is required for dam-dependent methyl-directed DNA mismatch repair. May act as a 'molecular matchmaker', a protein that promotes the formation of a stable complex between two or more DNA-binding proteins in an ATP-dependent manner without itself being part of a final effector complex. The sequence is that of DNA mismatch repair protein MutL from Syntrophus aciditrophicus (strain SB).